We begin with the raw amino-acid sequence, 330 residues long: Aspartate--ammonia ligase (330 aa).

Belongs to the class-II aminoacyl-tRNA synthetase family. AsnA subfamily.

The protein resides in the cytoplasm. The catalysed reaction is L-aspartate + NH4(+) + ATP = L-asparagine + AMP + diphosphate + H(+). Its pathway is amino-acid biosynthesis; L-asparagine biosynthesis; L-asparagine from L-aspartate (ammonia route): step 1/1. The polypeptide is Aspartate--ammonia ligase (Klebsiella pneumoniae subsp. pneumoniae (strain ATCC 700721 / MGH 78578)).